The chain runs to 343 residues: Fructose-bisphosphate aldolase (343 aa).

Ser53 is a binding site for D-glyceraldehyde 3-phosphate. Asp95 acts as the Proton donor in catalysis. The Zn(2+) site is built by His96, Asp131, Glu161, and His212. A dihydroxyacetone phosphate-binding site is contributed by Gly213. Zn(2+) is bound at residue His252. Dihydroxyacetone phosphate-binding positions include 253-255 (GGS) and 274-277 (NIDT).

Belongs to the class II fructose-bisphosphate aldolase family. It depends on Zn(2+) as a cofactor.

It carries out the reaction beta-D-fructose 1,6-bisphosphate = D-glyceraldehyde 3-phosphate + dihydroxyacetone phosphate. It functions in the pathway carbohydrate degradation; glycolysis; D-glyceraldehyde 3-phosphate and glycerone phosphate from D-glucose: step 4/4. Functionally, catalyzes the aldol condensation of dihydroxyacetone phosphate (DHAP or glycerone-phosphate) with glyceraldehyde 3-phosphate (G3P) to form fructose 1,6-bisphosphate (FBP) in gluconeogenesis and the reverse reaction in glycolysis. The polypeptide is Fructose-bisphosphate aldolase (fba) (Streptomyces coelicolor (strain ATCC BAA-471 / A3(2) / M145)).